We begin with the raw amino-acid sequence, 470 residues long: MNPNQKIIAIGSASLGILILNVILHVVSIIVTVLVLNNNGTGLNCNGTIIREYNETVRVERITQWYNTNTIEYIERPSNEYYMNNTEPLCEAQGFAPFSKDNGIRIGSRGHVFVIREPFVSCSPLECRTFFLTQGSLLNDKHSNGTVKDRSPYRTLMSVKVGQSPNVYQARFESVAWSATACHDGKKWMTVGVTGPDNQAVAVVNYGGVPVDIINSWGRDILRTQESSCTCIKGDCYWVMTDGPANRQAKYRIFKAKDGRIIGQTDISFNGGHIEECSCYPNEGKVECVCRDNWTGTNRPILVISPDLSYTVGYLCAGIPTDTPRGEDSQFTGSCTSPLGNKGYGVKGFGFRQGNDVWAGRTISRTSRSGFEIIKIRNGWTQNSKDQIRKQVIIDNLNWSGYSGSFTLPVELTKKGCLVPCFWVEMIRGKPEDTTIWTSSSSIVMCGVDHKIASWSWHDGAILPFDIDKI.

At 1 to 14 (MNPNQKIIAIGSAS) the chain is on the intravirion side. An involved in apical transport and lipid raft association region spans residues 11–32 (GSASLGILILNVILHVVSIIVT). Residues 15 to 35 (LGILILNVILHVVSIIVTVLV) form a helical membrane-spanning segment. The segment at 32 to 86 (TVLVLNNNGTGLNCNGTIIREYNETVRVERITQWYNTNTIEYIERPSNEYYMNNT) is hypervariable stalk region. Residues 36–470 (LNNNGTGLNC…AILPFDIDKI (435 aa)) lie on the Virion surface side of the membrane. N-linked (GlcNAc...) asparagine; by host glycans are attached at residues N39, N46, N54, and N84. Residues 89 to 470 (LCEAQGFAPF…AILPFDIDKI (382 aa)) are head of neuraminidase. Intrachain disulfides connect C90–C417, C122–C127, C182–C229, C231–C236, C277–C290, C279–C288, C316–C335, and C421–C446. A substrate-binding site is contributed by R116. A glycan (N-linked (GlcNAc...) asparagine; by host) is linked at N144. The active-site Proton donor/acceptor is the D149. R150 contacts substrate. 275 to 276 (EE) serves as a coordination point for substrate. R291 contributes to the substrate binding site. D292 lines the Ca(2+) pocket. An N-linked (GlcNAc...) asparagine; by host glycan is attached at N293. Ca(2+) contacts are provided by G296 and D322. R368 contributes to the substrate binding site. N398 carries an N-linked (GlcNAc...) asparagine; by host glycan. The Nucleophile role is filled by Y402.

This sequence belongs to the glycosyl hydrolase 34 family. As to quaternary structure, homotetramer. Ca(2+) is required as a cofactor. In terms of processing, N-glycosylated.

It localises to the virion membrane. The protein resides in the host apical cell membrane. It catalyses the reaction Hydrolysis of alpha-(2-&gt;3)-, alpha-(2-&gt;6)-, alpha-(2-&gt;8)- glycosidic linkages of terminal sialic acid residues in oligosaccharides, glycoproteins, glycolipids, colominic acid and synthetic substrates.. With respect to regulation, inhibited by the neuraminidase inhibitors zanamivir (Relenza) and oseltamivir (Tamiflu). These drugs interfere with the release of progeny virus from infected cells and are effective against all influenza strains. Resistance to neuraminidase inhibitors is quite rare. In terms of biological role, catalyzes the removal of terminal sialic acid residues from viral and cellular glycoconjugates. Cleaves off the terminal sialic acids on the glycosylated HA during virus budding to facilitate virus release. Additionally helps virus spread through the circulation by further removing sialic acids from the cell surface. These cleavages prevent self-aggregation and ensure the efficient spread of the progeny virus from cell to cell. Otherwise, infection would be limited to one round of replication. Described as a receptor-destroying enzyme because it cleaves a terminal sialic acid from the cellular receptors. May facilitate viral invasion of the upper airways by cleaving the sialic acid moieties on the mucin of the airway epithelial cells. Likely to plays a role in the budding process through its association with lipid rafts during intracellular transport. May additionally display a raft-association independent effect on budding. Plays a role in the determination of host range restriction on replication and virulence. Sialidase activity in late endosome/lysosome traffic seems to enhance virus replication. This is Neuraminidase from Influenza A virus (strain A/Equine/Kentucky/1/1981).